A 702-amino-acid polypeptide reads, in one-letter code: Ribosomal RNA large subunit methyltransferase K/L (702 aa).

The 112-residue stretch at 43-154 (LIYQSLMWSR…KETASIALDL (112 aa)) folds into the THUMP domain.

It belongs to the methyltransferase superfamily. RlmKL family.

It localises to the cytoplasm. It carries out the reaction guanosine(2445) in 23S rRNA + S-adenosyl-L-methionine = N(2)-methylguanosine(2445) in 23S rRNA + S-adenosyl-L-homocysteine + H(+). The enzyme catalyses guanosine(2069) in 23S rRNA + S-adenosyl-L-methionine = N(2)-methylguanosine(2069) in 23S rRNA + S-adenosyl-L-homocysteine + H(+). Functionally, specifically methylates the guanine in position 2445 (m2G2445) and the guanine in position 2069 (m7G2069) of 23S rRNA. This is Ribosomal RNA large subunit methyltransferase K/L from Salmonella paratyphi B (strain ATCC BAA-1250 / SPB7).